The primary structure comprises 120 residues: MSKLNVTNARRKTRVRIALRRTANGRPRLSVFRSSKHIYAQVIDDLKGETLASASSLEKSLRDAGNTGANIDAAKAVGKLLAERAVQQGVKEVVFDRGGYLYHGRVKALADAARESGLSF.

It belongs to the universal ribosomal protein uL18 family. As to quaternary structure, part of the 50S ribosomal subunit; part of the 5S rRNA/L5/L18/L25 subcomplex. Contacts the 5S and 23S rRNAs.

This is one of the proteins that bind and probably mediate the attachment of the 5S RNA into the large ribosomal subunit, where it forms part of the central protuberance. The sequence is that of Large ribosomal subunit protein uL18 from Rhodopseudomonas palustris (strain BisB5).